A 2525-amino-acid chain; its full sequence is Highly reducing polyketide synthase cm3B (2525 aa).

The segment covering 1 to 10 (MQSDTNNSPL) has biased composition (polar residues). The interval 1–29 (MQSDTNNSPLSWEELRSGAASSDANSSPP) is disordered. The 422-residue stretch at 29–450 (PEPIAIIGMS…GTNAHVVVDA (422 aa)) folds into the Ketosynthase family 3 (KS3) domain. Residues Cys-202, His-336, and His-376 each act as for beta-ketoacyl synthase activity in the active site. The malonyl-CoA:ACP transacylase (MAT) domain stretch occupies residues 560–895 (VFSGQGSQYA…FLECLGALHV (336 aa)). Positions 949-1087 (HELLGTFAHD…GLVHAETQAA (139 aa)) are N-terminal hotdog fold. The segment at 949 to 1252 (HELLGTFAHD…AKGVHTTTLP (304 aa)) is dehydratase (DH) domain. Positions 949–1257 (HELLGTFAHD…TTTLPGDTGL (309 aa)) constitute a PKS/mFAS DH domain. His-981 serves as the catalytic Proton acceptor; for dehydratase activity. The tract at residues 1107-1257 (VHEVTPQKLY…TTTLPGDTGL (151 aa)) is C-terminal hotdog fold. The Proton donor; for dehydratase activity role is filled by Asp-1169. The segment at 1399-1504 (LEVGAGTASA…KKLLKPGGKF (106 aa)) is methyltransferase (CMet) domain. The enoyl reductase (ER) domain stretch occupies residues 1799–2111 (GLLESIRWKD…AGKHTGKIVL (313 aa)). The Carrier domain occupies 2411 to 2489 (AQLLENISQL…ELAKIIAKES (79 aa)). The segment at 2411–2489 (AQLLENISQL…ELAKIIAKES (79 aa)) is ketoreductase (KR) domain. The residue at position 2449 (Ser-2449) is an O-(pantetheine 4'-phosphoryl)serine.

It participates in secondary metabolite biosynthesis. In terms of biological role, highly reducing polyketide synthase; part of the gene cluster that mediates the biosynthesis of beauveriolides I and III, cyclodepsipeptides acting as inhibitors of the acyl-CoA:cholesterol acyltransferase. The HR-PKS cm3B initiates the biosynthesis of beauveriolides by iteratively catalyzing the formation of the linear polyketide chain. The ATP-dependent acetyl-CoA ligase cm3D converts the polyketide carboxylic acid to a CoA thioester which id shuttled to the first T domain in the NRPS cm3A by the acetyltransferase cm3C. Cm3A contains 13 domains and assembles the polyketide chain, L-phenylalanine, L-alanine, and D-leucine (or D-allo-isoleucine) to form beauveriolide I (or beauveriolide III). The production of both beauveriolides I and III suggests the substrate adaptability of cm3B, using different amino acids as substrates. This Cordyceps militaris (strain CM01) (Caterpillar fungus) protein is Highly reducing polyketide synthase cm3B.